We begin with the raw amino-acid sequence, 248 residues long: MLRTSFQGVARLVRHKALYRSPCLLPRVHLASAFGSSTESLVARFCPEKTDLKDYALPNASWCSDMLSLYQEFLEKTKSGGWIKLPSFKSNRDHIQGLKLPFGLETASDKQDWRLFTRSIQLEGQGYEYVIFFHPSEKKSVCLFQPGPYLEGAPGFAHGGSLAALMDETYSKTAYLAGEGLFTLSLNIKFKNLIPVGSLAVLDIQVEKIEDQKLYMSCIAQSRDKQTVYAKSSGVFLQLQLEEQSQEQ.

Asp167 acts as the Proton donor/acceptor in catalysis.

Belongs to the THEM4/THEM5 thioesterase family. In terms of assembly, homodimer.

The protein localises to the mitochondrion matrix. The catalysed reaction is hexadecanoyl-CoA + H2O = hexadecanoate + CoA + H(+). The enzyme catalyses (9Z,12Z)-octadecadienoyl-CoA + H2O = (9Z,12Z)-octadecadienoate + CoA + H(+). It catalyses the reaction tetradecanoyl-CoA + H2O = tetradecanoate + CoA + H(+). It carries out the reaction (9Z)-octadecenoyl-CoA + H2O = (9Z)-octadecenoate + CoA + H(+). The catalysed reaction is (9Z)-hexadecenoyl-CoA + H2O = (9Z)-hexadecenoate + CoA + H(+). The enzyme catalyses (5Z,8Z,11Z,14Z)-eicosatetraenoyl-CoA + H2O = (5Z,8Z,11Z,14Z)-eicosatetraenoate + CoA + H(+). It catalyses the reaction octadecanoyl-CoA + H2O = octadecanoate + CoA + H(+). In terms of biological role, has acyl-CoA thioesterase activity towards long-chain (C16 and C18) fatty acyl-CoA substrates, with a preference for linoleoyl-CoA and other unsaturated long-chain fatty acid-CoA esters. Plays an important role in mitochondrial fatty acid metabolism, and in remodeling of the mitochondrial lipid cardiolipin. Required for normal mitochondrial function. The protein is Acyl-coenzyme A thioesterase THEM5 (Them5) of Mus musculus (Mouse).